Reading from the N-terminus, the 325-residue chain is D site-binding protein (325 aa).

Disordered regions lie at residues Met-1–Leu-99, Gly-127–Glu-200, and Arg-229–Asp-255. Residues Gly-17–Leu-28 are compositionally biased toward gly residues. 2 stretches are compositionally biased toward low complexity: residues Leu-29–Thr-38 and Ala-57–Ala-80. Ser-86 carries the post-translational modification Phosphoserine. The segment covering Pro-129–Gly-153 has biased composition (pro residues). The segment covering Cys-157–Gly-167 has biased composition (low complexity). In terms of domain architecture, bZIP spans Asp-255–Tyr-318. The segment at Lys-257 to Lys-279 is basic motif. A leucine-zipper region spans residues Ile-283 to Leu-297.

The protein belongs to the bZIP family. PAR subfamily. As to quaternary structure, binds DNA as a homodimer or a heterodimer. Can form a heterodimer with TEF. In terms of tissue distribution, ubiquitously expressed. Expressed in the suprachiasmatic nuclei (SCN) and in most peripheral tissues, with a strong circadian rhythmicity.

The protein resides in the nucleus. Functionally, this transcriptional activator recognizes and binds to the sequence 5'-RTTAYGTAAY-3' found in the promoter of genes such as albumin, CYP2A4 and CYP2A5. It is not essential for circadian rhythm generation, but modulates important clock output genes. May be a direct target for regulation by the circadian pacemaker component clock. May affect circadian period and sleep regulation. The sequence is that of D site-binding protein (DBP) from Homo sapiens (Human).